Consider the following 383-residue polypeptide: F-box/kelch-repeat protein At2g22030 (383 aa).

Residues 23–71 enclose the F-box domain; the sequence is SLLFSSLPYDVVLNCLARVSRRYYPNLSCVSKSFQSLVRSPELAHMRSL. Kelch repeat units lie at residues 130–175, 176–220, and 269–317; these read KIYF…VVNG, KLYV…LMRY, and GVCV…GMVD.

The polypeptide is F-box/kelch-repeat protein At2g22030 (Arabidopsis thaliana (Mouse-ear cress)).